A 251-amino-acid polypeptide reads, in one-letter code: uncharacterized protein (251 aa).

An N-acetyltransferase domain is found at 4 to 152 (IEITKDNIED…YFQLMALTWN (149 aa)).

Belongs to the acetyltransferase family.

This is an uncharacterized protein from Bacillus subtilis (strain 168).